A 468-amino-acid polypeptide reads, in one-letter code: Probable soluble pyridine nucleotide transhydrogenase (468 aa).

An FAD-binding site is contributed by 33–42 (ERGRMLGGVC).

It belongs to the class-I pyridine nucleotide-disulfide oxidoreductase family. FAD serves as cofactor.

Its subcellular location is the cytoplasm. It catalyses the reaction NAD(+) + NADPH = NADH + NADP(+). Its function is as follows. Conversion of NADPH, generated by peripheral catabolic pathways, to NADH, which can enter the respiratory chain for energy generation. The chain is Probable soluble pyridine nucleotide transhydrogenase (sthA) from Mycobacterium bovis (strain ATCC BAA-935 / AF2122/97).